A 414-amino-acid chain; its full sequence is Histidinol dehydrogenase (414 aa).

NAD(+) contacts are provided by Tyr-116, Gln-177, and Asn-200. Substrate is bound by residues Thr-223, Gln-245, and His-248. Zn(2+) contacts are provided by Gln-245 and His-248. Residues Glu-313 and His-314 each act as proton acceptor in the active site. Residues His-314, Asp-347, Glu-401, and His-406 each coordinate substrate. Asp-347 serves as a coordination point for Zn(2+). His-406 is a binding site for Zn(2+).

This sequence belongs to the histidinol dehydrogenase family. Zn(2+) serves as cofactor.

The enzyme catalyses L-histidinol + 2 NAD(+) + H2O = L-histidine + 2 NADH + 3 H(+). Its pathway is amino-acid biosynthesis; L-histidine biosynthesis; L-histidine from 5-phospho-alpha-D-ribose 1-diphosphate: step 9/9. In terms of biological role, catalyzes the sequential NAD-dependent oxidations of L-histidinol to L-histidinaldehyde and then to L-histidine. The chain is Histidinol dehydrogenase from Staphylococcus epidermidis (strain ATCC 35984 / DSM 28319 / BCRC 17069 / CCUG 31568 / BM 3577 / RP62A).